The primary structure comprises 271 residues: MTEVRRRGRPGQAEPVAQKGAQALERGIAILQYLEKSGGSSSVSDISLNLDLPLSTTFRLLKVLQAADFVYQDSQLGWWHIGLGVFNVGAAYIHNRDVLSVAGPFMRRLMLLSGETVNVAIRNGNEAVLIGQLECKSMVRMCAPLGSRLPLHASGAGKALLYPLAEEELMSIILQTGLQQFTPTTLVDMPTLLKDLEQARELGYTVDKEEHVVGLNCIASAIYDDVGSVVAAISISGPSSRLTEDRFVSQGELVRDTARDISTALGLKAHL.

Residues 21 to 83 form the HTH iclR-type domain; the sequence is AQALERGIAI…SQLGWWHIGL (63 aa). Positions 43-62 form a DNA-binding region, H-T-H motif; sequence VSDISLNLDLPLSTTFRLLK. In terms of domain architecture, IclR-ED spans 98–267; sequence VLSVAGPFMR…ARDISTALGL (170 aa). Residues 154-156, Asp-207, Cys-217, and 234-236 contribute to the glyoxylate site; these read SGA and SIS.

Functionally, negative regulator of allantoin and glyoxylate utilization operons. Binds to the gcl promoter and to the allS-allA intergenic region. This chain is HTH-type transcriptional repressor AllR (allR), found in Escherichia coli (strain UTI89 / UPEC).